The sequence spans 557 residues: MSKLIRRVVTVLALTSMASSFASGKIEAAAAESLATRFIASTENADDNVFQATAKKVRFGRNKNQRQEQKHTEAFCDKEFYPCEGGQCQPVDATQESCYGKMYCVRVNDDCNVEISQSVPEYATVGSPYPIEILAVGKKDCVNVVITQQLPCEVEFVSSDPATTPTSDSKLIWTIDRLGQGEKCKITVWVKPLKEGCCFTAATVCACPELRSYTKCGQPAICIKQEGPECACLRCPVCYKIEVCNTGSAIARNVVVDNPVPDGYTHASGQRVLSFNLGDMRPGDSKCFCVEFCPQKRGKVTNVATVSYCGGHKCSANVTTVVNEPCVQVNISGADWSYVCKPVEYTIVVSNPGDLKLYDVVIEDTAPSGATILEAAGAEICCNKAVWCIKEMCPGETLQFKVVAKAQSPGKFTNQVVVKTNSDCGTCTSCAEVTTHWKGLAATHMCVIDTNDPICVGENTVYRICVTNRGSAEDTNVSLILKFSKELQPVSSSGPTKGTITGNTVVFDALPKLGSKESVEFSVTLKGIAPGDARGEAILSSDTLTVPVADTENTHVY.

The N-terminal stretch at Met-1–Ala-22 is a signal peptide. A propeptide spanning residues Ser-23–Ala-40 is cleaved from the precursor.

Part of a disulfide cross-linked outer membrane complex (COMC) composed of the major outer membrane porin (MOMP), the small cysteine-rich protein (omcA) and the large cysteine-rich periplasmic protein (omcB).

It is found in the periplasm. Functionally, in elementary bodies (EBs, the infectious stage, which is able to survive outside the host cell) provides the structural integrity of the outer envelope through disulfide cross-links with the small cysteine-rich protein and the major outer membrane porin. It has been described in publications as the Sarkosyl-insoluble COMC (Chlamydia outer membrane complex), and serves as the functional equivalent of peptidoglycan. This is Large cysteine-rich periplasmic protein omcB (omcB) from Chlamydia psittaci (Chlamydophila psittaci).